The chain runs to 188 residues: Peptidyl-tRNA hydrolase (188 aa).

Tyr-16 is a tRNA binding site. His-21 acts as the Proton acceptor in catalysis. Positions 66, 68, and 114 each coordinate tRNA.

Belongs to the PTH family. Monomer.

The protein localises to the cytoplasm. The enzyme catalyses an N-acyl-L-alpha-aminoacyl-tRNA + H2O = an N-acyl-L-amino acid + a tRNA + H(+). In terms of biological role, hydrolyzes ribosome-free peptidyl-tRNAs (with 1 or more amino acids incorporated), which drop off the ribosome during protein synthesis, or as a result of ribosome stalling. Functionally, catalyzes the release of premature peptidyl moieties from peptidyl-tRNA molecules trapped in stalled 50S ribosomal subunits, and thus maintains levels of free tRNAs and 50S ribosomes. This chain is Peptidyl-tRNA hydrolase, found in Geobacter sp. (strain M21).